The following is a 587-amino-acid chain: uncharacterized protein (587 aa).

A signal peptide spans M1–A21. The Lumenal segment spans residues L22–R541. N25 is a glycosylation site (N-linked (GlcNAc...) asparagine). Positions G44 to F108 are disordered. Residues R63 to D90 show a composition bias toward basic and acidic residues. Polar residues predominate over residues A91 to F108. The SUN domain maps to N163–M331. N378, N381, N408, N448, and N486 each carry an N-linked (GlcNAc...) asparagine glycan. A helical membrane pass occupies residues I542–E562. The Cytoplasmic segment spans residues L563–R587.

It belongs to the SLP1 family. Interacts with EMP65.

Its subcellular location is the endoplasmic reticulum membrane. In terms of biological role, may be involved in membrane protein folding. Required for localization of MPS3 to the nuclear envelope. This is an uncharacterized protein from Saccharomyces cerevisiae (strain ATCC 204508 / S288c) (Baker's yeast).